The chain runs to 635 residues: Cationic amino acid transporter 2, vacuolar (635 aa).

Residues 1 to 48 lie on the Cytoplasmic side of the membrane; sequence MGFLVDTQKEGGGHSWGYVRSLVRRKQVDSANGQSHGHQLARALTVPH. The chain crosses the membrane as a helical span at residues 49-69; sequence LVAIGVGATIGAGVYILVGTV. Residues 70–76 are Vacuolar-facing; it reads AREHSGP. Residues 77–97 form a helical membrane-spanning segment; the sequence is SLALSFLIAGIAAGLSAFCYA. The Cytoplasmic portion of the chain corresponds to 98–108; the sequence is ELSSRCPSAGS. A helical membrane pass occupies residues 109-131; sequence AYHYSYICVGEGVAWIIGWALIL. Residues 132–171 are Vacuolar-facing; that stretch reads EYTIGGSAVARGISPNLALIFGGEDGLPAILARHQIPGLD. The chain crosses the membrane as a helical span at residues 172-192; that stretch reads IVVDPCAAILVFVVTGLLCMG. Over 193-200 the chain is Cytoplasmic; the sequence is IKESTFAQ. The chain crosses the membrane as a helical span at residues 201–221; the sequence is GIVTAVNVCVLLFVIVAGSYL. Residues 222-235 lie on the Vacuolar side of the membrane; it reads GFKTGWPGYELPTG. A helical transmembrane segment spans residues 236 to 256; that stretch reads FFPFGVDGMFAGSATVFFAFI. The Cytoplasmic portion of the chain corresponds to 257–280; it reads GFDSVASTAEEVRNPQRDLPIGIG. A helical transmembrane segment spans residues 281–301; the sequence is LALLLCCSLYMMVSIVIVGLI. Residues 302–324 are Vacuolar-facing; the sequence is PYYAMDPDTPISSAFASHDMQWA. A helical transmembrane segment spans residues 325-345; it reads VYLITLGAVMALCSALMGALL. Over 346-376 the chain is Cytoplasmic; sequence PQPRILMAMARDGLLPSIFSDINKRTQVPVK. The helical transmembrane segment at 377 to 397 threads the bilayer; sequence ATVATGLCAATLAFFMDVSQL. Residue Ala398 is a topological domain, vacuolar. The helical transmembrane segment at 399 to 419 threads the bilayer; sequence GMVSVGTLLAFTMVAISVLIL. Over 420 to 493 the chain is Cytoplasmic; sequence RYVPPDEQPL…CLVLSEETRR (74 aa). The helical transmembrane segment at 494 to 514 threads the bilayer; that stretch reads IVAGWSIMFTCVGAFLLSYAA. The Vacuolar segment spans residues 515–524; that stretch reads SSLSFPGLIR. Residues 525 to 545 traverse the membrane as a helical segment; the sequence is YPLCGVGGCLLLAGLIALSSI. The Cytoplasmic segment spans residues 546-560; that stretch reads DQDDARHTFGHSGGY. The helical transmembrane segment at 561-581 threads the bilayer; sequence MCPFVPLLPIICILINMYLLV. The Vacuolar segment spans residues 582 to 585; that stretch reads NLGS. The helical transmembrane segment at 586-606 threads the bilayer; sequence ATWARVSVWLLIGVIVYVFYG. Topologically, residues 607–635 are cytoplasmic; sequence RKNSSLANAVYVTTAHAEEIYREHEGSLA.

The protein belongs to the amino acid-polyamine-organocation (APC) superfamily. Cationic amino acid transporter (CAT) (TC 2.A.3.3) family. In terms of tissue distribution, expressed in roots, stems, flowers, leaves, and siliques.

It localises to the vacuole membrane. In terms of biological role, permease involved in the transport of the cationic amino acids. The protein is Cationic amino acid transporter 2, vacuolar (CAT2) of Arabidopsis thaliana (Mouse-ear cress).